Consider the following 497-residue polypeptide: Histidine--tRNA ligase (497 aa).

The protein belongs to the class-II aminoacyl-tRNA synthetase family. Homodimer.

Its subcellular location is the cytoplasm. The catalysed reaction is tRNA(His) + L-histidine + ATP = L-histidyl-tRNA(His) + AMP + diphosphate + H(+). The polypeptide is Histidine--tRNA ligase (Dinoroseobacter shibae (strain DSM 16493 / NCIMB 14021 / DFL 12)).